The sequence spans 35 residues: Conotoxin Cal6.1c (35 aa).

A propeptide spanning residues 1 to 35 (GLNRPSKRCLAGSAPCEFHKRSTCCSGHCIIWWCA) is cleaved from the precursor. 3 cysteine pairs are disulfide-bonded: C9-C25, C16-C29, and C24-C34.

Belongs to the conotoxin O1 superfamily. As to expression, expressed by the venom duct.

The protein resides in the secreted. In terms of biological role, probable neurotoxin with unknown target. Possibly targets ion channels. The sequence is that of Conotoxin Cal6.1c from Californiconus californicus (California cone).